Here is a 376-residue protein sequence, read N- to C-terminus: Mannosyl phosphorylinositol ceramide synthase CSH1 (376 aa).

Helical transmembrane passes span 7 to 27 (ILII…FDLL) and 274 to 294 (ILSC…GEFT). The interval 331–351 (NKEKRRNPTRHEYNSRGKRLR) is disordered. At serine 354 the chain carries Phosphoserine.

It belongs to the glycosyltransferase 32 family. As to quaternary structure, heterodimer of CSH1 and CSG2.

The protein resides in the vacuole membrane. It carries out the reaction a 1D-myo-inositol-1-phospho-N-[(R)-2-hydroxy-very-long-chain fatty acyl]-(R)-4-hydroxysphingoid base + GDP-alpha-D-mannose = an alpha-D-mannosyl-(1&lt;-&gt;6)-1D-myo-inositol-1-phospho-N-[(R)-2-hydroxy-very-long-chain fatty acyl]-(R)-4-hydroxysphingoid base + GDP + H(+). Functionally, involved in the synthesis of mannosyl phosphorylinositol ceramide. Catalyzes the addition of mannosyl to phosphorylinositol ceramide. The sequence is that of Mannosyl phosphorylinositol ceramide synthase CSH1 from Saccharomyces cerevisiae (strain ATCC 204508 / S288c) (Baker's yeast).